Here is a 244-residue protein sequence, read N- to C-terminus: 5-oxoprolinase subunit A (244 aa).

The protein belongs to the LamB/PxpA family. Forms a complex composed of PxpA, PxpB and PxpC.

The catalysed reaction is 5-oxo-L-proline + ATP + 2 H2O = L-glutamate + ADP + phosphate + H(+). Catalyzes the cleavage of 5-oxoproline to form L-glutamate coupled to the hydrolysis of ATP to ADP and inorganic phosphate. The sequence is that of 5-oxoprolinase subunit A from Salmonella typhi.